A 513-amino-acid chain; its full sequence is ATP synthase subunit alpha 1 (513 aa).

Residue 169–176 (GDRQCGKT) coordinates ATP.

Belongs to the ATPase alpha/beta chains family. In terms of assembly, F-type ATPases have 2 components, CF(1) - the catalytic core - and CF(0) - the membrane proton channel. CF(1) has five subunits: alpha(3), beta(3), gamma(1), delta(1), epsilon(1). CF(0) has three main subunits: a(1), b(2) and c(9-12). The alpha and beta chains form an alternating ring which encloses part of the gamma chain. CF(1) is attached to CF(0) by a central stalk formed by the gamma and epsilon chains, while a peripheral stalk is formed by the delta and b chains.

Its subcellular location is the cell inner membrane. The enzyme catalyses ATP + H2O + 4 H(+)(in) = ADP + phosphate + 5 H(+)(out). In terms of biological role, produces ATP from ADP in the presence of a proton gradient across the membrane. The alpha chain is a regulatory subunit. The protein is ATP synthase subunit alpha 1 of Burkholderia pseudomallei (strain 1710b).